Reading from the N-terminus, the 231-residue chain is Ribosyldihydronicotinamide dehydrogenase [quinone] (231 aa).

FAD is bound by residues histidine 12 and 18 to 21; that span reads FNGS. The residue at position 80 (serine 80) is a Phosphoserine. 104-107 provides a ligand contact to FAD; that stretch reads LYWF. Substrate is bound at residue 127-129; sequence FDI. FAD is bound by residues 148–151 and tyrosine 156; that span reads TTGG. Residues histidine 174 and histidine 178 each coordinate Zn(2+). An FAD-binding site is contributed by glutamate 194. Serine 197 carries the post-translational modification Phosphoserine. Arginine 201 contributes to the FAD binding site. Position 223 (cysteine 223) interacts with Zn(2+).

This sequence belongs to the NAD(P)H dehydrogenase (quinone) family. In terms of assembly, homodimer. The cofactor is Zn(2+). Requires FAD as cofactor.

It localises to the cytoplasm. It catalyses the reaction 1-(beta-D-ribofuranosyl)-1,4-dihydronicotinamide + a quinone + H(+) = beta-nicotinamide D-riboside + a quinol. Inhibited by melatonin, resveratrol and 5-hydroxytryptamine. Its function is as follows. The enzyme apparently serves as a quinone reductase in connection with conjugation reactions of hydroquinones involved in detoxification pathways as well as in biosynthetic processes such as the vitamin K-dependent gamma-carboxylation of glutamate residues in prothrombin synthesis. The chain is Ribosyldihydronicotinamide dehydrogenase [quinone] (NQO2) from Homo sapiens (Human).